The primary structure comprises 276 residues: 3-keto-5-aminohexanoate cleavage enzyme (276 aa).

Position 14 (Glu14) interacts with (5S)-5-amino-3-oxohexanoate. His46 and His48 together coordinate Zn(2+). (5S)-5-amino-3-oxohexanoate-binding residues include Ser82, Gly85, Thr106, and Asn108. A Zn(2+)-binding site is contributed by Glu230.

The protein belongs to the BKACE family. Kce subfamily. In terms of assembly, homotetramer. It depends on Zn(2+) as a cofactor.

It catalyses the reaction (5S)-5-amino-3-oxohexanoate + acetyl-CoA = (3S)-3-aminobutanoyl-CoA + acetoacetate. It participates in amino-acid degradation; L-lysine degradation via acetate pathway. Functionally, involved in the anaerobic fermentation of lysine. Catalyzes the reversible reaction between 3-keto-5-aminohexanoate (KAH) and acetyl-CoA to form 3-aminobutyryl-CoA and acetoacetate. The reaction involves the deprotonation of KAH, the nucleophilic addition onto acetyl-CoA and the intramolecular transfer of the CoA moiety. This is 3-keto-5-aminohexanoate cleavage enzyme from Cloacimonas acidaminovorans (strain Evry).